We begin with the raw amino-acid sequence, 162 residues long: Endoribonuclease YbeY (162 aa).

Zn(2+)-binding residues include His-128, His-132, and His-138.

The protein belongs to the endoribonuclease YbeY family. It depends on Zn(2+) as a cofactor.

The protein localises to the cytoplasm. Functionally, single strand-specific metallo-endoribonuclease involved in late-stage 70S ribosome quality control and in maturation of the 3' terminus of the 16S rRNA. The sequence is that of Endoribonuclease YbeY from Lactococcus lactis subsp. cremoris (strain SK11).